The sequence spans 223 residues: Methanol utilization control regulatory protein MoxX (223 aa).

The region spanning 16–133 (QILIVDDHPV…EICAAFTEVA (118 aa)) is the Response regulatory domain. Residues 155-220 (PGTSAPRLTG…DLVVKGIRYF (66 aa)) enclose the HTH luxR-type domain. Positions 179 to 198 (YRDIADRACISYKTVSNVSL) form a DNA-binding region, H-T-H motif.

In terms of processing, phosphorylated by MoxY.

The protein localises to the cytoplasm. Its function is as follows. Member of the two-component regulatory system MoxY/MoxX probably involved in the regulation of the methanol dehydrogenase expression. The protein is Methanol utilization control regulatory protein MoxX (moxX) of Paracoccus denitrificans.